The chain runs to 419 residues: UDP-N-acetylglucosamine 1-carboxyvinyltransferase (419 aa).

Residue 22 to 23 (KN) participates in phosphoenolpyruvate binding. Position 95 (Arg-95) interacts with UDP-N-acetyl-alpha-D-glucosamine. The active-site Proton donor is the Cys-119. Residue Cys-119 is modified to 2-(S-cysteinyl)pyruvic acid O-phosphothioketal. UDP-N-acetyl-alpha-D-glucosamine is bound by residues 164 to 167 (KVSV), Asp-308, and Ile-330.

It belongs to the EPSP synthase family. MurA subfamily.

The protein localises to the cytoplasm. It catalyses the reaction phosphoenolpyruvate + UDP-N-acetyl-alpha-D-glucosamine = UDP-N-acetyl-3-O-(1-carboxyvinyl)-alpha-D-glucosamine + phosphate. It participates in cell wall biogenesis; peptidoglycan biosynthesis. Cell wall formation. Adds enolpyruvyl to UDP-N-acetylglucosamine. The protein is UDP-N-acetylglucosamine 1-carboxyvinyltransferase of Rickettsia massiliae (strain Mtu5).